The following is a 78-amino-acid chain: Large ribosomal subunit protein bL28 (78 aa).

The disordered stretch occupies residues 1-21 (MSRVCQVTGKRPMVGNNRSHA).

It belongs to the bacterial ribosomal protein bL28 family.

The sequence is that of Large ribosomal subunit protein bL28 from Shewanella halifaxensis (strain HAW-EB4).